Consider the following 233-residue polypeptide: MSTDLQHIRIGLTNNHPCSYLPEREERVAVALDENLHTEDNYQVLMANGFRRSGDTIYKPHCQHCNACQPIRIAVPDFIPSKSQKRLQSKGKALHWEMKPELDPNWFDLYSRYIYERHKDGTMFPPREDEFARFTQTTWLTTGFLHIYDESDRLLAVAVTDIMDKCASAFYTFFDPDYPLSLGTLGVLFQLEYCQRENKHWLYLGYQIDECPAMNYKTRFQRHQRLVNQRWQG.

This sequence belongs to the R-transferase family. Bpt subfamily.

It localises to the cytoplasm. It carries out the reaction N-terminal L-glutamyl-[protein] + L-leucyl-tRNA(Leu) = N-terminal L-leucyl-L-glutamyl-[protein] + tRNA(Leu) + H(+). The enzyme catalyses N-terminal L-aspartyl-[protein] + L-leucyl-tRNA(Leu) = N-terminal L-leucyl-L-aspartyl-[protein] + tRNA(Leu) + H(+). Functionally, functions in the N-end rule pathway of protein degradation where it conjugates Leu from its aminoacyl-tRNA to the N-termini of proteins containing an N-terminal aspartate or glutamate. The chain is Aspartate/glutamate leucyltransferase from Vibrio campbellii (strain ATCC BAA-1116).